Reading from the N-terminus, the 507-residue chain is DNA nucleotidylexotransferase (507 aa).

A Nuclear localization signal motif is present at residues 11–17 (PLRKKAK). Residues 27-124 (QHNVKFKEIV…RPVEIQNRHL (98 aa)) enclose the BRCT domain. The involved in DNA binding stretch occupies residues 254 to 258 (VGLKT). A 2'-deoxyribonucleoside 5'-triphosphate is bound by residues 329 to 334 (GFRRGK) and 338 to 341 (HDVD). Positions 339, 341, and 431 each coordinate Mg(2+). 446-447 (GW) lines the a 2'-deoxyribonucleoside 5'-triphosphate pocket.

Belongs to the DNA polymerase type-X family. Mg(2+) serves as cofactor. As to expression, found in the thymus and not in the spleen, kidney, intestine, or liver.

It localises to the nucleus. The enzyme catalyses DNA(n) + a 2'-deoxyribonucleoside 5'-triphosphate = DNA(n+1) + diphosphate. Its function is as follows. Template-independent DNA polymerase which catalyzes the random addition of deoxynucleoside 5'-triphosphate to the 3'-end of a DNA initiator. One of the in vivo functions of this enzyme is the addition of nucleotides at the junction (N region) of rearranged Ig heavy chain and T-cell receptor gene segments during the maturation of B- and T-cells. This Xenopus laevis (African clawed frog) protein is DNA nucleotidylexotransferase (dntt).